A 253-amino-acid chain; its full sequence is Triosephosphate isomerase, cytosolic (253 aa).

Residues Asn-10 and Lys-12 each coordinate substrate. The active-site Electrophile is the His-96. Glu-166 acts as the Proton acceptor in catalysis.

The protein belongs to the triosephosphate isomerase family. Homodimer.

Its subcellular location is the cytoplasm. It catalyses the reaction D-glyceraldehyde 3-phosphate = dihydroxyacetone phosphate. It participates in carbohydrate biosynthesis; gluconeogenesis. It functions in the pathway carbohydrate degradation; glycolysis; D-glyceraldehyde 3-phosphate from glycerone phosphate: step 1/1. This chain is Triosephosphate isomerase, cytosolic, found in Secale cereale (Rye).